Consider the following 178-residue polypeptide: Oligoribonuclease (178 aa).

The 162-residue stretch at leucine 7–leucine 168 folds into the Exonuclease domain. Tyrosine 128 is a catalytic residue.

The protein belongs to the oligoribonuclease family.

It localises to the cytoplasm. Its function is as follows. 3'-to-5' exoribonuclease specific for small oligoribonucleotides. This is Oligoribonuclease from Pseudomonas savastanoi pv. phaseolicola (strain 1448A / Race 6) (Pseudomonas syringae pv. phaseolicola (strain 1448A / Race 6)).